Reading from the N-terminus, the 184-residue chain is ATP synthase subunit b, chloroplastic (184 aa).

The helical transmembrane segment at 27–49 (LATNPINLSVVLGVLIFFGKGVL) threads the bilayer.

This sequence belongs to the ATPase B chain family. In terms of assembly, F-type ATPases have 2 components, F(1) - the catalytic core - and F(0) - the membrane proton channel. F(1) has five subunits: alpha(3), beta(3), gamma(1), delta(1), epsilon(1). F(0) has four main subunits: a(1), b(1), b'(1) and c(10-14). The alpha and beta chains form an alternating ring which encloses part of the gamma chain. F(1) is attached to F(0) by a central stalk formed by the gamma and epsilon chains, while a peripheral stalk is formed by the delta, b and b' chains.

It localises to the plastid. It is found in the chloroplast thylakoid membrane. F(1)F(0) ATP synthase produces ATP from ADP in the presence of a proton or sodium gradient. F-type ATPases consist of two structural domains, F(1) containing the extramembraneous catalytic core and F(0) containing the membrane proton channel, linked together by a central stalk and a peripheral stalk. During catalysis, ATP synthesis in the catalytic domain of F(1) is coupled via a rotary mechanism of the central stalk subunits to proton translocation. Functionally, component of the F(0) channel, it forms part of the peripheral stalk, linking F(1) to F(0). The chain is ATP synthase subunit b, chloroplastic from Carica papaya (Papaya).